The sequence spans 758 residues: MYQSNLNLQKKVTSDLLYYSWLSLKCGWKYFFEIHNYCLFNSISRSWFKRTSSLIKKGFFIYPTVPLKIKNFFLSCTKKNFNLLKFKIVENAFLIIIKNFFIYKIYVQSMNLIECIFNVTSFSFMKPFFCKQCPNLLFSLTFFPFFKNDFLQKKKYFNSNKNFVKNFFSNEYFFSSSNSFFSIKFWDSQIKNFMTLKIIKLFDYVHKVRLKNIFSKFTYDSFFFVEIDKMFNLNLVNISSNLIYNSIENFGCSLLSSFFLNLYILEGDFFLDRFIFKICFKRNLFKTFFSFKKVSFFYQYSLKNFIPLRLEKNFFVSSFLKEVNSGKYHNIDIFYLFNNKVFTVYEKNIYYVRYLNFLIFGFLSSKNFIFFFKLKYLFFLRNKLYFNFREVQIFSSSNDKVIFLGVYIAYNKIYNFFEKLRVNKKYFLNVFQKIITKHNTFLKALKNIFHYSRCFNFFKKNCYPNFYKKKNFSFFNFYTESFRILKFFDAFFINTHHFFLPVELITSTKLVNFQKYTMYSFDFYNQKLSILLKDILENFNQFLSCSLVSIDLNLYNCLFEFKKHLVLLYNYYSPVYSFFSKRQRYKLNFNSFNYYSFSNFSGQNRSFFSSKANQFRFFKFFVPFKVFLKKLRLLGFIHPFKFRPIGNVRLLLFEDKFILRNFGFFVYSVLNWFSICENFSHLRFFVELIRESCFLTLCRKHNKMKLWSYSVYTFDLVFSKSVYRTISFFPTRKFIFNLKRKSFLVDVRFNLDETIFLE.

The protein localises to the plastid. It localises to the chloroplast. This is Maturase-like protein 2 (mat2) from Euglena gracilis.